Here is a 137-residue protein sequence, read N- to C-terminus: uncharacterized protein (137 aa).

Residues 116-136 (YLSIANLATLLLFGIIGLSII) traverse the membrane as a helical segment.

It localises to the host membrane. This is an uncharacterized protein from His1 virus (isolate Australia/Victoria) (His1V).